A 327-amino-acid polypeptide reads, in one-letter code: Surface protein P12p (327 aa).

2 consecutive 6-Cys domains span residues 21–168 and 169–304; these read NIEI…LKKN and IIFG…FSNY. Cystine bridges form between Cys25/Cys60, Cys74/Cys144, Cys93/Cys142, Cys173/Cys208, Cys223/Cys285, and Cys234/Cys283. N-linked (GlcNAc...) asparagine glycans are attached at residues Asn246, Asn264, and Asn298.

It localises to the cell surface. It is found in the cell membrane. This chain is Surface protein P12p (P12p), found in Plasmodium berghei (strain Anka).